Consider the following 596-residue polypeptide: V-type ATP synthase alpha chain (596 aa).

ATP is bound at residue 233 to 240 (GPFGAGKT).

It belongs to the ATPase alpha/beta chains family.

It catalyses the reaction ATP + H2O + 4 H(+)(in) = ADP + phosphate + 5 H(+)(out). Functionally, produces ATP from ADP in the presence of a proton gradient across the membrane. The V-type alpha chain is a catalytic subunit. The polypeptide is V-type ATP synthase alpha chain (Streptococcus sanguinis (strain SK36)).